We begin with the raw amino-acid sequence, 424 residues long: UDP-N-acetylglucosamine 1-carboxyvinyltransferase (424 aa).

22–23 (KN) is a phosphoenolpyruvate binding site. Residue Arg98 participates in UDP-N-acetyl-alpha-D-glucosamine binding. The Proton donor role is filled by Cys122. Residue Cys122 is modified to 2-(S-cysteinyl)pyruvic acid O-phosphothioketal. UDP-N-acetyl-alpha-D-glucosamine-binding positions include 127–131 (RPVDQ), Asp312, and Ile334.

The protein belongs to the EPSP synthase family. MurA subfamily.

It is found in the cytoplasm. The enzyme catalyses phosphoenolpyruvate + UDP-N-acetyl-alpha-D-glucosamine = UDP-N-acetyl-3-O-(1-carboxyvinyl)-alpha-D-glucosamine + phosphate. Its pathway is cell wall biogenesis; peptidoglycan biosynthesis. Functionally, cell wall formation. Adds enolpyruvyl to UDP-N-acetylglucosamine. The chain is UDP-N-acetylglucosamine 1-carboxyvinyltransferase from Xanthomonas axonopodis pv. citri (strain 306).